Consider the following 211-residue polypeptide: Glutathione S-transferase (211 aa).

The GST N-terminal domain maps to 3 to 87 (DNIVLYYFDA…YLSKKYNICG (85 aa)). Glutathione contacts are provided by residues 58–59 (QV), 71–72 (QS), D105, K117, and T121. The 123-residue stretch at 89-211 (SELNEFYADM…YITNRKESVY (123 aa)) folds into the GST C-terminal domain.

This sequence belongs to the GST superfamily. As to quaternary structure, homodimer. In the absence of ligands two homodimers may interact to form a tetramer.

The enzyme catalyses RX + glutathione = an S-substituted glutathione + a halide anion + H(+). Its activity is regulated as follows. Inhibited by chloroquine, cibacron blue, ferriprotoporphyrin IX (hemin) and S-hexylglutathione. Conjugation of reduced glutathione to a wide number of exogenous and endogenous hydrophobic electrophiles. May also function as a storage protein or ligandin for parasitotoxic ferriprotoporphyrin IX (hemin). In Plasmodium falciparum (isolate 3D7), this protein is Glutathione S-transferase.